Here is a 218-residue protein sequence, read N- to C-terminus: N-(5'-phosphoribosyl)anthranilate isomerase (218 aa).

Belongs to the TrpF family.

The enzyme catalyses N-(5-phospho-beta-D-ribosyl)anthranilate = 1-(2-carboxyphenylamino)-1-deoxy-D-ribulose 5-phosphate. It participates in amino-acid biosynthesis; L-tryptophan biosynthesis; L-tryptophan from chorismate: step 3/5. The chain is N-(5'-phosphoribosyl)anthranilate isomerase from Desulfatibacillum aliphaticivorans.